The following is a 499-amino-acid chain: Protein dml1 (499 aa).

This sequence belongs to the misato family.

The protein resides in the mitochondrion. Its function is as follows. Involved in the partitioning of the mitochondrial organelle and mitochondrial DNA (mtDNA) inheritance. This chain is Protein dml1 (dml1), found in Aspergillus clavatus (strain ATCC 1007 / CBS 513.65 / DSM 816 / NCTC 3887 / NRRL 1 / QM 1276 / 107).